Consider the following 127-residue polypeptide: Thioredoxin domain-containing protein 8 (127 aa).

Positions 1–92 (MVQIIKDTNE…SQKVTLFSRI (92 aa)) constitute a Thioredoxin domain. C32 and C35 are oxidised to a cystine.

This sequence belongs to the thioredoxin family. In terms of tissue distribution, testis-specific. Only expressed during spermiogenesis, prominently in the Golgi apparatus of pachytene spermatocytes and round and elongated spermatids, with a transient localization in the developing acrosome of round spermatids (at protein level).

The protein resides in the cytoplasm. It localises to the golgi apparatus. May be required for post-translational modifications of proteins required for acrosomal biogenesis. May act by reducing disulfide bonds within the sperm. The protein is Thioredoxin domain-containing protein 8 (TXNDC8) of Homo sapiens (Human).